The chain runs to 224 residues: Cardosin-E (224 aa).

The Peptidase A1 domain occupies 1-221 (DSGSAIVALT…DYGNLLVGFA (221 aa)). Aspartate 35 is a catalytic residue. Cysteine 125 and cysteine 129 form a disulfide bridge. Aspartate 134 is an active-site residue.

The protein belongs to the peptidase A1 family. In terms of assembly, heterodimer of a light chain and a heavy chain. An intermediate form is produced first, and undergoes proteolytic processing to remove the internal plant-specific insert (PSI) and the propeptide. Post-translationally, N-glycosylated. As to expression, pistils.

The protein resides in the microsome membrane. Its subcellular location is the protein storage vacuole. It localises to the secreted. It is found in the cell wall. The protein localises to the extracellular space. The protein resides in the extracellular matrix. Its activity is regulated as follows. Inhibited by pepstatin. Aspartic protease with a high preference for bonds between hydrophobic residues. The chain is Cardosin-E from Cynara cardunculus (Cardoon).